A 1363-amino-acid chain; its full sequence is MEYLKLCFYLFFFYFVMEQIQQQQQQQQQQQQQQQQQQQQQQQQQQQQLQQQQQQQQQQQQQQQQQQQQQQQNPKMNNQPNETRLPSPPLLNSTVPKNELNINHHHQHNYKINSAPLKASQHANEYDHNEESLNSSNNNNNNNFNNSRPTFSSCSGNSNNTTTTTTTTTTTNPINGSVNSNVTTTSINTIHQKFITQLKQRLGKGIDYNNYINKLKNINNINNISKLINLSSQPDAIGKNNNLISNTGPVAEMYDDEEFDEFDEEEDDDISAQKLVGILSRESSSSNLSSIAPSPLLQQPNCLPSPFINGTPLLSNHSNNNNNNNNNHHHHHHHHHQKRLSIGSMDSTNHLTPLPLLHKHTNNNNNINNNNNHNHNNILGSPNQLNRSQDFTSKNNNINNNNNNNNKIINEENCNKGSPNQNSSENNSEEENEYHGGEEGNVYSVYDLNSPYFNERKQRALSNNKSQQPPQHVPTPCTYNDCCICAYGPPPSFFTSAPTWADICYIALYCLTLSRPEVKYYHIKKDICTFIDCHYETICMRKRTSIWRQTVNMTLSHPQYFEMFQQESALENGRKGYYGLKQIHDPYEHTALNKRSRRKRRHEQKMIQEELKKNGFTNLLLNSPSIENNDQHHNGYIQSYNNNSNHNNNNNNNNNNNNNNSNNNNNNNNNNSNNNNNNNINNNNINNNNNNNILTSPIQHHPHSHQQQHHQQQLQHQQHQQQQLLHQQHQQLLHQQHQQQLQIQYQQQQTHNNNLNQTQQLYYNHHHHQQQQQQQQQQQQHNNNNNNNNSNHNSVLTSPPLSQFPKTPLQLSQTPQHSLSALSSPFLKTLTIEDEDDSYNGQVHKKLRSAKLTSVNSINSNSGMSLPMISSPSPNLSHMQKNRPNFDDILNSSLSSSNTTNSATTSSSNSILSNSLSNISNSSGGSGGVCISEDYESNIQRRKSLNNIVLNKTNKNILPKLDDECDDEDDFHFTENEREVPVSNLKSSSFIINKNNIINQQNYNENNNNNNNNNNNNYNINNINNNNNNNFDDADDENEFENKDNINNNNNNNNNNNNNNNNNKNDKNESEFESKEKLNSPFGSSIPNIVNNEQLSPYSQQSLSSSSSENPSPQWSTNGPSQTSSSKLSNSTSTLINNNNNSMSIMSINSSGNSINNTTTYNNNNNFINNNSNNNNNMEIDDDDEDGIDGIEGEDDSKKRMRKTTRPDEKIYLEIYYQHFYENNGKHSKDELITLSNNLNWKVNRIQRWLDNRRTKDKLKNLRVSQERTISFGASSTSSTQTSTNSPSSQLSPLVPNMNNNDQQSISTPSLILSQINNNQNNNQNNNNNNNTNNADVTLISNNNVPNTPIMANTQSNINSLLN.

Residues Phe-15–Asn-73 adopt a coiled-coil conformation. Disordered stretches follow at residues Gln-66–Pro-96, Ser-120–Ser-177, Ile-308–Gly-437, Leu-621–Gln-731, His-765–Ser-818, Ser-857–Ile-911, Gln-1001–Asn-1137, Asn-1166–Arg-1202, and Ile-1270–Ser-1341. Polar residues predominate over residues Asn-73 to Pro-96. A compositionally biased stretch (low complexity) spans Ser-132–Ser-147. Residues Arg-148–Ser-158 are compositionally biased toward polar residues. Composition is skewed to low complexity over residues Asn-159–Ser-177 and Ser-315–Asn-326. Over residues Asn-327–Arg-339 the composition is skewed to basic residues. The segment covering Thr-348–Ile-378 has biased composition (low complexity). Positions Leu-379–Ser-393 are enriched in polar residues. Low complexity-rich tracts occupy residues Lys-394–Ile-408, Asn-415–Asn-426, Asn-641–Ile-693, His-709–Gln-731, and Gln-770–Asn-793. A coiled-coil region spans residues Gln-738–Asn-789. Composition is skewed to polar residues over residues Ser-794–Ser-818 and Ser-857–Arg-883. Composition is skewed to low complexity over residues Ile-889–Ile-911, Gln-1001–Phe-1031, and Asn-1045–Asn-1063. The span at Lys-1064–Leu-1078 shows a compositional bias: basic and acidic residues. A compositionally biased stretch (polar residues) spans Pro-1081–Leu-1095. 3 stretches are compositionally biased toward low complexity: residues Ser-1096–Ser-1116, Thr-1123–Asn-1137, and Asn-1166–Asn-1177. Residues Glu-1179–Asp-1195 are compositionally biased toward acidic residues. Residues Lys-1198–Asn-1261 constitute a DNA-binding region (homeobox). Positions Ser-1275 to Leu-1294 are enriched in low complexity. Over residues Asn-1297–Ile-1316 the composition is skewed to polar residues. Residues Asn-1317–Asn-1334 are compositionally biased toward low complexity.

It localises to the nucleus. Its function is as follows. Putative transcription factor. In Dictyostelium discoideum (Social amoeba), this protein is Homeobox protein 13 (hbx13).